The chain runs to 458 residues: MKKTFNEFKDFIRNKEVAVVGIGISNIPLIHFLVKLGANVTAFDKKSEEALGEVAVEFKSKGIKLQLGENYLDNLEGFDVVFKTPSMRIDNPALVKAKESGAYITSEMEEFIKYCPAKIFGITGSDGKTTTTTLVYNILMTEGYKTWVGGNIGNPLFSNIEEMKEEDKVVLELSSFQLMTMKEEINCALVTNLSPNHLDIHKDMDEYVDAKKNIFKYQEVNDLLVLNRDNDITNSLVKEAKSRVMQFSRKEEIESGAYLNGDKLVLLGKEVCALEDIKLKGMHNVENLLAAFCLVSEDASIESMAKVATTFTGVEHRCEFVREIDGVKYYNDSIASSPTRTIAGLRAFEKPVILIAGGYDKHIPFEPLAEEGLDKIQALVLTGLTKNKIKDAFDKAMKDRGINIPIYMEDGFNEAIYRAKDIANEGDIITLSPACASFDMFPNFEVRGNKFKEIVNNL.

124–130 (GSDGKTT) provides a ligand contact to ATP.

It belongs to the MurCDEF family.

It is found in the cytoplasm. The catalysed reaction is UDP-N-acetyl-alpha-D-muramoyl-L-alanine + D-glutamate + ATP = UDP-N-acetyl-alpha-D-muramoyl-L-alanyl-D-glutamate + ADP + phosphate + H(+). The protein operates within cell wall biogenesis; peptidoglycan biosynthesis. In terms of biological role, cell wall formation. Catalyzes the addition of glutamate to the nucleotide precursor UDP-N-acetylmuramoyl-L-alanine (UMA). The protein is UDP-N-acetylmuramoylalanine--D-glutamate ligase of Clostridium novyi (strain NT).